Consider the following 255-residue polypeptide: MPKLVVFSGAGLSAESGLETFRDNGGLWAQYDPMEVCNYENWLDNFELVHRFYNLRREELGKVQPNAMHKFLASLPMILNKPRIALSAKKKHKDPIEVIHITQNVDDLLERAGVSNVIHLHGELCKIICPQCEHIFDIGYTHFEPHNCPNCDYGKLKPFIVFFYERAPKYVIMHDIFSQLSSKDCVLVIGTSGNVVDISTILAFAESRARIGYKILNNLQYCPSIAESVFDKIFYKPTTQAIAEIEQELEQFFIS.

One can recognise a Deacetylase sirtuin-type domain in the interval 1–252 (MPKLVVFSGA…AEIEQELEQF (252 aa)). Residue 9-28 (GAGLSAESGLETFRDNGGLW) participates in NAD(+) binding. 2 residues coordinate substrate: Tyr-53 and Arg-56. NAD(+) is bound at residue 103 to 106 (QNVD). His-121 serves as the catalytic Proton acceptor. The Zn(2+) site is built by Cys-129, Cys-132, Cys-148, and Cys-151. Residues 190–192 (GTS), 218–220 (NLQ), and Thr-238 contribute to the NAD(+) site.

The protein belongs to the sirtuin family. Class III subfamily. It depends on Zn(2+) as a cofactor.

The protein localises to the cytoplasm. It catalyses the reaction N(6)-acetyl-L-lysyl-[protein] + NAD(+) + H2O = 2''-O-acetyl-ADP-D-ribose + nicotinamide + L-lysyl-[protein]. The enzyme catalyses N(6)-succinyl-L-lysyl-[protein] + NAD(+) + H2O = 2''-O-succinyl-ADP-D-ribose + nicotinamide + L-lysyl-[protein]. Its function is as follows. NAD-dependent lysine deacetylase and desuccinylase that specifically removes acetyl and succinyl groups on target proteins. Modulates the activities of several proteins which are inactive in their acylated form. The protein is NAD-dependent protein deacylase of Helicobacter hepaticus (strain ATCC 51449 / 3B1).